Consider the following 872-residue polypeptide: Protein SEY1 (872 aa).

The Cytoplasmic segment spans residues 1–749; the sequence is MVANGHFAGV…KRSAIGGITQ (749 aa). Residues 49–294 enclose the GB1/RHD3-type G domain; that stretch reads GFNYHLISVF…IEGGIFLPEY (246 aa). 59 to 66 is a binding site for GTP; sequence GSQSTGKS. Residues 482-504 adopt a coiled-coil conformation; that stretch reads SNYQQELSLYQKDLENIGGQLRR. Residues 676–704 form a disordered region; the sequence is LDKWIGHTPSSATPADEEDLTPIGGVDED. Positions 690-704 are enriched in acidic residues; sequence ADEEDLTPIGGVDED. A helical membrane pass occupies residues 750-770; it reads VPLYFYGLLLALGWNEIVAVL. Topologically, residues 771-773 are lumenal; that stretch reads RNP. Residues 774 to 794 form a helical membrane-spanning segment; that stretch reads AYFLLLFVCAVTAYVTYQLNL. At 795 to 872 the chain is on the cytoplasmic side; it reads WGPIIKMTEA…IDDADDDDDF (78 aa). The segment at 849–872 is disordered; sequence NRKSAGGFQNNRSHIDDADDDDDF.

Belongs to the TRAFAC class dynamin-like GTPase superfamily. GB1/RHD3 GTPase family. RHD3 subfamily.

It localises to the endoplasmic reticulum membrane. Functionally, cooperates with the reticulon proteins and tubule-shaping DP1 family proteins to generate and maintain the structure of the tubular endoplasmic reticulum network. Has GTPase activity, which is required for its function in ER organization. The polypeptide is Protein SEY1 (Paracoccidioides brasiliensis (strain Pb03)).